Reading from the N-terminus, the 590-residue chain is Neuronal PAS domain-containing protein 1 (590 aa).

Residues 45-98 enclose the bHLH domain; sequence QRKEKSRNAARSRRGKENLEFFELAKLLPLPGAISSQLDKASIVRLSVTYLRLR. A PAS 1 domain is found at 135-207; that stretch reads EQHLGGHILQ…LGLRTPTPGP (73 aa). The disordered stretch occupies residues 198-229; the sequence is LGLRTPTPGPPTPPSVSSSSSSSSSLADTPEI. The span at 212–222 shows a compositional bias: low complexity; sequence SVSSSSSSSSS. The 67-residue stretch at 293–359 folds into the PAS 2 domain; the sequence is APLAELPLHG…IRQSHVDLLD (67 aa). A PAC domain is found at 365–408; it reads TGYYRWLQRAGGFVWLQSVATVAGSGKSPGEHHVLWVSHVLSQA. Positions 425–494 are disordered; the sequence is ACEEASSPGP…SHPATPRPEF (70 aa). The span at 433 to 442 shows a compositional bias: pro residues; the sequence is GPEPTEPEPP. Basic and acidic residues predominate over residues 463–476; sequence IKVEPGPRETKGSE.

As to quaternary structure, efficient DNA binding requires dimerization with another bHLH protein. Interacts with ARNT; forms a heterodimer that binds core DNA sequence 5'-[AG]CGTG-3' within the hypoxia response element (HRE) leading to a transcriptional repressor on its target gene TH.

It is found in the nucleus. In terms of biological role, may control regulatory pathways relevant to schizophrenia and to psychotic illness. May play a role in late central nervous system development by modulating EPO expression in response to cellular oxygen level. Forms a heterodimer that binds core DNA sequence 5'-TACGTG-3' within the hypoxia response element (HRE) leading to transcriptional repression on its target gene TH. This is Neuronal PAS domain-containing protein 1 (NPAS1) from Homo sapiens (Human).